A 76-amino-acid polypeptide reads, in one-letter code: MVIFMEKRWKCPKCGNTEFFEKEVAMTGTGLSKIFDIQHNEYIVITCKKCGYSEFYDKSIVKSKDNLMNILDIFFG.

This is an uncharacterized protein from Methanocaldococcus jannaschii (strain ATCC 43067 / DSM 2661 / JAL-1 / JCM 10045 / NBRC 100440) (Methanococcus jannaschii).